Reading from the N-terminus, the 212-residue chain is Peroxiredoxin 2 (212 aa).

Positions 7-162 constitute a Thioredoxin domain; the sequence is PLIGEKFPEM…ILRSIRALQL (156 aa). C49 (cysteine sulfenic acid (-SOH) intermediate) is an active-site residue. Residue R125 participates in substrate binding.

The protein belongs to the peroxiredoxin family. Prx6 subfamily. Homodecamer. Pentamer of dimers that assemble into a ring structure.

The protein resides in the cytoplasm. The enzyme catalyses a hydroperoxide + [thioredoxin]-dithiol = an alcohol + [thioredoxin]-disulfide + H2O. Functionally, thiol-specific peroxidase that catalyzes the reduction of hydrogen peroxide and organic hydroperoxides to water and alcohols, respectively. Plays a role in cell protection against oxidative stress by detoxifying peroxides. This Sulfurisphaera tokodaii (strain DSM 16993 / JCM 10545 / NBRC 100140 / 7) (Sulfolobus tokodaii) protein is Peroxiredoxin 2.